A 203-amino-acid chain; its full sequence is E3 ubiquitin-protein ligase RNF152 (203 aa).

Residues 12-55 form an RING-type zinc finger; that stretch reads CQICFNYYSPRRRPKLLDCKHTCCSVCLQQMRTSQKDVRCPWCR. The segment at 106–165 is necessary for interaction with RRAGA; sequence ISKERALLPGDMGCRLLPGSQQKSVTVVTVPAEQRPLQGGAPQEAVEEEPDRRGVAKSST. Residues 167–187 traverse the membrane as a helical segment; that stretch reads SGVCTVILVACVLVFLLGIVL.

It belongs to the RNF152 family. Interacts with RRAGA (inactive GDP-bound form); stimulated by amino acid starvation. In terms of processing, ubiquitinated. Autoubiquitinated in vitro, leading to its degradation by the proteasome.

The protein localises to the lysosome membrane. It catalyses the reaction S-ubiquitinyl-[E2 ubiquitin-conjugating enzyme]-L-cysteine + [acceptor protein]-L-lysine = [E2 ubiquitin-conjugating enzyme]-L-cysteine + N(6)-ubiquitinyl-[acceptor protein]-L-lysine.. It participates in protein modification; protein ubiquitination. Functionally, E3 ubiquitin-protein ligase that acts as a negative regulator of mTORC1 signaling by mediating ubiquitination of RagA/RRAGA and RHEB. Catalyzes 'Lys-63'-linked polyubiquitination of RagA/RRAGA in response to amino acid starvation, thereby regulating mTORC1 signaling. Also mediates monoubiquitination of RHEB, promoting its association with the TSC-TBC complex and subsequent inhibition. Also mediates 'Lys-48'-linked polyubiquitination of target proteins and their subsequent targeting to the proteasome for degradation. Induces apoptosis when overexpressed. This chain is E3 ubiquitin-protein ligase RNF152, found in Ailuropoda melanoleuca (Giant panda).